The following is a 407-amino-acid chain: Cysteine desulfurase (407 aa).

Residue Lys226 is modified to N6-(pyridoxal phosphate)lysine. The Cysteine persulfide intermediate role is filled by Cys364.

Belongs to the class-V pyridoxal-phosphate-dependent aminotransferase family. Csd subfamily. In terms of assembly, homodimer. Interacts with SufE and the SufBCD complex composed of SufB, SufC and SufD. The interaction with SufE is required to mediate the direct transfer of the sulfur atom from the S-sulfanylcysteine. It depends on pyridoxal 5'-phosphate as a cofactor.

It localises to the cytoplasm. The catalysed reaction is (sulfur carrier)-H + L-cysteine = (sulfur carrier)-SH + L-alanine. It carries out the reaction L-selenocysteine + AH2 = hydrogenselenide + L-alanine + A + H(+). It functions in the pathway cofactor biosynthesis; iron-sulfur cluster biosynthesis. Its function is as follows. Cysteine desulfurases mobilize the sulfur from L-cysteine to yield L-alanine, an essential step in sulfur metabolism for biosynthesis of a variety of sulfur-containing biomolecules. Component of the suf operon, which is activated and required under specific conditions such as oxidative stress and iron limitation. Acts as a potent selenocysteine lyase in vitro, that mobilizes selenium from L-selenocysteine. Selenocysteine lyase activity is however unsure in vivo. The sequence is that of Cysteine desulfurase from Pectobacterium carotovorum subsp. carotovorum (strain PC1).